Consider the following 186-residue polypeptide: Protein SPMIP2 (186 aa).

A disordered region spans residues 163-186 (SSLPRASKPPKLPKLPKKEKKRKH). Positions 176-186 (KLPKKEKKRKH) are enriched in basic residues.

The polypeptide is Protein SPMIP2 (Homo sapiens (Human)).